The sequence spans 212 residues: Probable dual specificity protein phosphatase DDB_G0269404 (212 aa).

The 140-residue stretch at 30 to 169 (FDAQEVIPNL…LINYEATILK (140 aa)) folds into the Tyrosine-protein phosphatase domain. The active-site Phosphocysteine intermediate is the C113.

Belongs to the protein-tyrosine phosphatase family. Non-receptor class dual specificity subfamily.

It carries out the reaction O-phospho-L-tyrosyl-[protein] + H2O = L-tyrosyl-[protein] + phosphate. The enzyme catalyses O-phospho-L-seryl-[protein] + H2O = L-seryl-[protein] + phosphate. The catalysed reaction is O-phospho-L-threonyl-[protein] + H2O = L-threonyl-[protein] + phosphate. Functionally, has a dual specificity toward Ser/Thr and Tyr-containing proteins. This is Probable dual specificity protein phosphatase DDB_G0269404 from Dictyostelium discoideum (Social amoeba).